Here is a 706-residue protein sequence, read N- to C-terminus: GDNF-inducible zinc finger protein 1 (706 aa).

Positions C31–E103 constitute a BTB domain. Positions V149 to A165 are enriched in polar residues. Disordered stretches follow at residues V149 to R220 and R242 to E308. Basic and acidic residues-rich tracts occupy residues P197 to A212 and R242 to A277. 10 C2H2-type zinc fingers span residues F315–H337, Y346–H369, F375–H398, H405–H427, Y433–H455, F461–H483, F489–H511, F517–H539, Y545–H567, and Y573–H595. Residue S611 is modified to Phosphoserine.

Belongs to the krueppel C2H2-type zinc-finger protein family. In terms of assembly, interacts with NCL. In terms of tissue distribution, expressed in several tissues, with highest levels in liver. Also expressed in embryos from 7 to 17 dpc.

It is found in the nucleus. It localises to the cytoplasm. The protein resides in the nucleolus. Its function is as follows. Transcriptional repressor that binds the GZF1 responsive element (GRE) (consensus: 5'-TGCGCN[TG][CA]TATA-3'). May be regulating VSX2/HOX10 expression. The protein is GDNF-inducible zinc finger protein 1 of Mus musculus (Mouse).